The following is a 304-amino-acid chain: Ribonuclease Z (304 aa).

Zn(2+) is bound by residues histidine 61, histidine 63, aspartate 65, histidine 66, histidine 138, aspartate 206, and histidine 265. Aspartate 65 serves as the catalytic Proton acceptor.

The protein belongs to the RNase Z family. Homodimer. It depends on Zn(2+) as a cofactor.

It catalyses the reaction Endonucleolytic cleavage of RNA, removing extra 3' nucleotides from tRNA precursor, generating 3' termini of tRNAs. A 3'-hydroxy group is left at the tRNA terminus and a 5'-phosphoryl group is left at the trailer molecule.. Functionally, zinc phosphodiesterase, which displays some tRNA 3'-processing endonuclease activity. Probably involved in tRNA maturation, by removing a 3'-trailer from precursor tRNA. The chain is Ribonuclease Z from Lachnospira eligens (strain ATCC 27750 / DSM 3376 / VPI C15-48 / C15-B4) (Eubacterium eligens).